The primary structure comprises 175 residues: Zinc finger protein ZAT18 (175 aa).

C2H2-type zinc fingers lie at residues 49–71 (FECK…RASH) and 93–115 (HKCT…MRKH). Positions 71–78 (HKKPKLIV) match the Nuclear localization signal motif. The EAR-like (transcriptional repression) signature appears at 146-152 (LDLNLTP).

As to expression, mostly expressed in stems, siliques and leaves, and, to a lower extent, in cotyledons, hypocotyls and roots.

It localises to the nucleus. In terms of biological role, transcription factor involved in stress responses. Positive regulator of the jasmonic acid (JA)- mediated signaling pathway. Triggers the up-regulation of LOX3, VSP2, PAL1 and PAL2 in a JA-dependent manner. Promotes drought and osmotic stress tolerance by preventing reactive oxygen species (ROS) production (e.g. H(2)O(2)). This chain is Zinc finger protein ZAT18, found in Arabidopsis thaliana (Mouse-ear cress).